Here is a 183-residue protein sequence, read N- to C-terminus: Ubiquitin-conjugating enzyme E2 6 (183 aa).

Positions 1-148 (MASPSKRREM…VKEYCEKYAK (148 aa)) constitute a UBC core domain. Cys-85 serves as the catalytic Glycyl thioester intermediate. Positions 148–183 (KPEEILSDDDDDDSMSEDGSDSDDDDDDEIVGKADP) are disordered. Positions 152 to 176 (ILSDDDDDDSMSEDGSDSDDDDDDE) are enriched in acidic residues.

This sequence belongs to the ubiquitin-conjugating enzyme family. Expressed in roots, petals, sepals and silique walls.

It catalyses the reaction S-ubiquitinyl-[E1 ubiquitin-activating enzyme]-L-cysteine + [E2 ubiquitin-conjugating enzyme]-L-cysteine = [E1 ubiquitin-activating enzyme]-L-cysteine + S-ubiquitinyl-[E2 ubiquitin-conjugating enzyme]-L-cysteine.. It functions in the pathway protein modification; protein ubiquitination. Its function is as follows. Accepts the ubiquitin from the E1 complex and catalyzes its covalent attachment to other proteins. This is Ubiquitin-conjugating enzyme E2 6 (UBC6) from Arabidopsis thaliana (Mouse-ear cress).